The following is a 196-amino-acid chain: Nucleoid occlusion factor SlmA (196 aa).

The 62-residue stretch at 7-68 folds into the HTH tetR-type domain; that stretch reads PNRRDEILQA…GLIEFIEESI (62 aa). The H-T-H motif DNA-binding region spans 31–50; sequence TTAKLAKQVGVSEAALYRHF. The stretch at 71–93 forms a coiled coil; it reads RVNRILEDEKDTLKRIELLLKLL.

The protein belongs to the nucleoid occlusion factor SlmA family. As to quaternary structure, homodimer. Interacts with FtsZ.

It localises to the cytoplasm. The protein localises to the nucleoid. Its function is as follows. Required for nucleoid occlusion (NO) phenomenon, which prevents Z-ring formation and cell division over the nucleoid. Acts as a DNA-associated cell division inhibitor that binds simultaneously chromosomal DNA and FtsZ, and disrupts the assembly of FtsZ polymers. SlmA-DNA-binding sequences (SBS) are dispersed on non-Ter regions of the chromosome, preventing FtsZ polymerization at these regions. The polypeptide is Nucleoid occlusion factor SlmA (Aliivibrio fischeri (strain MJ11) (Vibrio fischeri)).